The sequence spans 115 residues: Nucleoid-associated protein Ava_2322 (115 aa).

This sequence belongs to the YbaB/EbfC family. In terms of assembly, homodimer.

Its subcellular location is the cytoplasm. It is found in the nucleoid. Functionally, binds to DNA and alters its conformation. May be involved in regulation of gene expression, nucleoid organization and DNA protection. The sequence is that of Nucleoid-associated protein Ava_2322 from Trichormus variabilis (strain ATCC 29413 / PCC 7937) (Anabaena variabilis).